Here is a 297-residue protein sequence, read N- to C-terminus: 2-dehydropantoate 2-reductase (297 aa).

Residues 11–16 (GAGAMG), Asn-107, and Ala-133 contribute to the NADP(+) site. Asn-107 contributes to the substrate binding site. Residue Lys-187 is the Proton donor of the active site. Residues Asn-191, Asn-195, Asn-205, and Ser-251 each coordinate substrate. Glu-263 contacts NADP(+).

It belongs to the ketopantoate reductase family.

The protein resides in the cytoplasm. It carries out the reaction (R)-pantoate + NADP(+) = 2-dehydropantoate + NADPH + H(+). It functions in the pathway cofactor biosynthesis; (R)-pantothenate biosynthesis; (R)-pantoate from 3-methyl-2-oxobutanoate: step 2/2. Catalyzes the NADPH-dependent reduction of ketopantoate into pantoic acid. The protein is 2-dehydropantoate 2-reductase of Listeria monocytogenes serovar 1/2a (strain ATCC BAA-679 / EGD-e).